We begin with the raw amino-acid sequence, 67 residues long: Coiled-coil domain-containing protein 179 (67 aa).

Disordered stretches follow at residues 1–32 (MCLRVKDEEPAQVYPEGPRRHHPSDVSTRQSV) and 47–67 (RKLGKRFARPNPIPDTGILWT). The stretch at 27–53 (STRQSVEKRINYMQNLQKEKRKLGKRF) forms a coiled coil.

This chain is Coiled-coil domain-containing protein 179 (Ccdc179), found in Mus musculus (Mouse).